The sequence spans 620 residues: Glutathione-regulated potassium-efflux system protein KefC (620 aa).

The Periplasmic portion of the chain corresponds to 1 to 3 (MDS). The chain crosses the membrane as a helical span at residues 4 to 24 (HTLVQALIYLGSAALIVPIAV). Residue arginine 25 is a topological domain, cytoplasmic. Residues 26–46 (LGLGSVLGYLIAGCIIGPWGL) traverse the membrane as a helical segment. Over 47–53 (RLVTDAE) the chain is Periplasmic. A helical transmembrane segment spans residues 54 to 74 (SILHFAEIGVVLMLFIIGLEL). At 75–89 (DPQRLWKLRAAVFGG) the chain is on the cytoplasmic side. The helical transmembrane segment at 90 to 110 (GALQMVICGGLLGLFCMLLGL) threads the bilayer. Topologically, residues 111–113 (RWQ) are periplasmic. The helical transmembrane segment at 114 to 134 (VAELIGMTLALSSTAIAMQAM) threads the bilayer. The Cytoplasmic portion of the chain corresponds to 135–148 (NERNLMVTQMGRSA). Residues 149-169 (FAVLLFQDIAAIPLVAMIPLL) form a helical membrane-spanning segment. Residues 170-177 (AASSASTT) lie on the Periplasmic side of the membrane. The helical transmembrane segment at 178–198 (MGAFALSALKVAGALVLVVLL) threads the bilayer. Over 199 to 213 (GRYVTRPALRFVARS) the chain is Cytoplasmic. Residues 214–233 (GLREVFSAVALFLVFGFGLL) form a helical membrane-spanning segment. The Periplasmic segment spans residues 234–236 (LEE). The helical transmembrane segment at 237–254 (VGLSMAMGAFLAGVLLAS) threads the bilayer. Residues 255-269 (SEYRHALESDIEPFK) are Cytoplasmic-facing. A helical transmembrane segment spans residues 270 to 290 (GLLLGLFFIGVGMSIDFGTLI). The Periplasmic segment spans residues 291–293 (ENP). Residues 294–314 (LRIVILLLGFLIIKIAMLWLI) form a helical membrane-spanning segment. Residues 315–326 (ARPLQVPNKQRR) are Cytoplasmic-facing. A helical membrane pass occupies residues 327-347 (WFAVLLGQGSEFAFVVFGAAQ). Residues 348–358 (MANVLEPEWAK) are Periplasmic-facing. Residues 359–379 (SLTLAVALSMAATPILLVILN) traverse the membrane as a helical segment. Residues 380-620 (RLEQSSTEEA…ADEPETKPSS (241 aa)) are Cytoplasmic-facing. The RCK N-terminal domain maps to 399-518 (QPRVIIAGFG…AGVEKPERET (120 aa)). Residues 597–620 (GWQGTEEGKHTGNMADEPETKPSS) form a disordered region.

Belongs to the monovalent cation:proton antiporter 2 (CPA2) transporter (TC 2.A.37) family. KefC subfamily. Homodimer. Interacts with the regulatory subunit KefF.

Its subcellular location is the cell inner membrane. Its function is as follows. Pore-forming subunit of a potassium efflux system that confers protection against electrophiles. Catalyzes K(+)/H(+) antiport. The chain is Glutathione-regulated potassium-efflux system protein KefC from Escherichia coli O157:H7.